A 460-amino-acid chain; its full sequence is tRNA(Ile)-lysidine synthase (460 aa).

Position 37-42 (37-42) interacts with ATP; sequence SGGADS.

Belongs to the tRNA(Ile)-lysidine synthase family.

The protein resides in the cytoplasm. It carries out the reaction cytidine(34) in tRNA(Ile2) + L-lysine + ATP = lysidine(34) in tRNA(Ile2) + AMP + diphosphate + H(+). Its function is as follows. Ligates lysine onto the cytidine present at position 34 of the AUA codon-specific tRNA(Ile) that contains the anticodon CAU, in an ATP-dependent manner. Cytidine is converted to lysidine, thus changing the amino acid specificity of the tRNA from methionine to isoleucine. This Treponema denticola (strain ATCC 35405 / DSM 14222 / CIP 103919 / JCM 8153 / KCTC 15104) protein is tRNA(Ile)-lysidine synthase.